The primary structure comprises 313 residues: ADP-L-glycero-D-manno-heptose-6-epimerase (313 aa).

Residues 10–11 (MI), 31–32 (DN), Lys-38, Arg-53, 75–79 (EGACS), and Asn-92 each bind NADP(+). Catalysis depends on Tyr-139, which acts as the Proton acceptor. Lys-143 contributes to the NADP(+) binding site. Asn-174 lines the substrate pocket. NADP(+)-binding residues include Val-175 and Lys-183. Lys-183 (proton acceptor) is an active-site residue. Substrate contacts are provided by residues Ser-185, His-192, 206 to 209 (FEGS), Arg-214, and Tyr-277.

This sequence belongs to the NAD(P)-dependent epimerase/dehydratase family. HldD subfamily. Homopentamer. NADP(+) serves as cofactor.

It catalyses the reaction ADP-D-glycero-beta-D-manno-heptose = ADP-L-glycero-beta-D-manno-heptose. The protein operates within nucleotide-sugar biosynthesis; ADP-L-glycero-beta-D-manno-heptose biosynthesis; ADP-L-glycero-beta-D-manno-heptose from D-glycero-beta-D-manno-heptose 7-phosphate: step 4/4. It participates in bacterial outer membrane biogenesis; LPS core biosynthesis. Catalyzes the interconversion between ADP-D-glycero-beta-D-manno-heptose and ADP-L-glycero-beta-D-manno-heptose via an epimerization at carbon 6 of the heptose. The protein is ADP-L-glycero-D-manno-heptose-6-epimerase of Vibrio parahaemolyticus serotype O3:K6 (strain RIMD 2210633).